Consider the following 242-residue polypeptide: Ribonuclease PH (242 aa).

Residues Arg89 and 127 to 129 (GTR) contribute to the phosphate site.

The protein belongs to the RNase PH family. As to quaternary structure, homohexameric ring arranged as a trimer of dimers.

It catalyses the reaction tRNA(n+1) + phosphate = tRNA(n) + a ribonucleoside 5'-diphosphate. Functionally, phosphorolytic 3'-5' exoribonuclease that plays an important role in tRNA 3'-end maturation. Removes nucleotide residues following the 3'-CCA terminus of tRNAs; can also add nucleotides to the ends of RNA molecules by using nucleoside diphosphates as substrates, but this may not be physiologically important. Probably plays a role in initiation of 16S rRNA degradation (leading to ribosome degradation) during starvation. The protein is Ribonuclease PH of Neisseria meningitidis serogroup A / serotype 4A (strain DSM 15465 / Z2491).